Consider the following 91-residue polypeptide: Large ribosomal subunit protein uL23c (91 aa).

It belongs to the universal ribosomal protein uL23 family. Part of the 50S ribosomal subunit.

Its subcellular location is the plastid. It is found in the chloroplast. Binds to 23S rRNA. The chain is Large ribosomal subunit protein uL23c (rpl23) from Pinus koraiensis (Korean pine).